A 151-amino-acid polypeptide reads, in one-letter code: SsrA-binding protein (151 aa).

This sequence belongs to the SmpB family.

It localises to the cytoplasm. Its function is as follows. Required for rescue of stalled ribosomes mediated by trans-translation. Binds to transfer-messenger RNA (tmRNA), required for stable association of tmRNA with ribosomes. tmRNA and SmpB together mimic tRNA shape, replacing the anticodon stem-loop with SmpB. tmRNA is encoded by the ssrA gene; the 2 termini fold to resemble tRNA(Ala) and it encodes a 'tag peptide', a short internal open reading frame. During trans-translation Ala-aminoacylated tmRNA acts like a tRNA, entering the A-site of stalled ribosomes, displacing the stalled mRNA. The ribosome then switches to translate the ORF on the tmRNA; the nascent peptide is terminated with the 'tag peptide' encoded by the tmRNA and targeted for degradation. The ribosome is freed to recommence translation, which seems to be the essential function of trans-translation. In Wolinella succinogenes (strain ATCC 29543 / DSM 1740 / CCUG 13145 / JCM 31913 / LMG 7466 / NCTC 11488 / FDC 602W) (Vibrio succinogenes), this protein is SsrA-binding protein.